The following is a 311-amino-acid chain: Methionyl-tRNA formyltransferase (311 aa).

Residue 110–113 (SLLP) participates in (6S)-5,6,7,8-tetrahydrofolate binding.

The protein belongs to the Fmt family.

The catalysed reaction is L-methionyl-tRNA(fMet) + (6R)-10-formyltetrahydrofolate = N-formyl-L-methionyl-tRNA(fMet) + (6S)-5,6,7,8-tetrahydrofolate + H(+). Functionally, attaches a formyl group to the free amino group of methionyl-tRNA(fMet). The formyl group appears to play a dual role in the initiator identity of N-formylmethionyl-tRNA by promoting its recognition by IF2 and preventing the misappropriation of this tRNA by the elongation apparatus. The polypeptide is Methionyl-tRNA formyltransferase (Streptococcus agalactiae serotype Ia (strain ATCC 27591 / A909 / CDC SS700)).